Reading from the N-terminus, the 662-residue chain is ATP-dependent zinc metalloprotease FtsH (662 aa).

Basic and acidic residues predominate over residues 1 to 15; the sequence is MSENPVKRPGKDGSR. Residues 1–35 are disordered; sequence MSENPVKRPGKDGSRNKFKPVQEEGGTPGWFRSKG. Over 1-39 the chain is Cytoplasmic; the sequence is MSENPVKRPGKDGSRNKFKPVQEEGGTPGWFRSKGESPQ. A helical transmembrane segment spans residues 40–60; that stretch reads GKFPGFLLFLMAGLLMLFVFL. At 61–154 the chain is on the periplasmic side; sequence RFFSGTDAPE…LKVEKGSSDL (94 aa). The chain crosses the membrane as a helical span at residues 155–175; it reads NTFLALFAPWIIFAALYFFLF. At 176–662 the chain is on the cytoplasmic side; sequence RRMSGQNGAQ…QGALPNPVTA (487 aa). ATP is bound at residue 250–257; the sequence is GPPGTGKT. Residue His472 coordinates Zn(2+). Residue Glu473 is part of the active site. Positions 476 and 548 each coordinate Zn(2+).

This sequence in the central section; belongs to the AAA ATPase family. In the C-terminal section; belongs to the peptidase M41 family. As to quaternary structure, homohexamer. The cofactor is Zn(2+).

The protein resides in the cell inner membrane. Its function is as follows. Acts as a processive, ATP-dependent zinc metallopeptidase for both cytoplasmic and membrane proteins. Plays a role in the quality control of integral membrane proteins. In Pelodictyon phaeoclathratiforme (strain DSM 5477 / BU-1), this protein is ATP-dependent zinc metalloprotease FtsH.